A 469-amino-acid chain; its full sequence is Putative pyridoxal-dependent decarboxylase domain-containing protein 2 (469 aa).

A coiled-coil region spans residues Thr12–Lys40. Residues Glu28–Ser44 show a composition bias toward basic and acidic residues. Residues Glu28–Ile47 are disordered.

This sequence belongs to the group II decarboxylase family. Pyridoxal 5'-phosphate serves as cofactor.

The chain is Putative pyridoxal-dependent decarboxylase domain-containing protein 2 (PDXDC2P) from Homo sapiens (Human).